We begin with the raw amino-acid sequence, 161 residues long: V-type proton ATPase 16 kDa proteolipid subunit c 2 (161 aa).

Over 1-15 (MSYDLETAEHAAYAP) the chain is Lumenal. A helical membrane pass occupies residues 16–36 (FFGYMGAASAQIFTVLGAAYG). Residues 37 to 58 (TAKSAVGICSMGVMRPELIMKS) lie on the Cytoplasmic side of the membrane. The chain crosses the membrane as a helical span at residues 59–79 (VIPVIMAGIIGIYGLVVAMVL). Residues 80–98 (KGKVQAASAGYDLNKGFAH) are Lumenal-facing. The helical transmembrane segment at 99–119 (LAAGLTCGLCGLGAGYAIGIV) threads the bilayer. Residues 120-137 (GDAGVRGTAQQPRLFVGM) are Cytoplasmic-facing. The chain crosses the membrane as a helical span at residues 138–158 (ILILIFSEVLGLYGMIVALIL). At 159-161 (GTS) the chain is on the lumenal side.

Belongs to the V-ATPase proteolipid subunit family. In terms of assembly, V-ATPase is a heteromultimeric enzyme made up of two complexes: the ATP-hydrolytic V1 complex and the proton translocation V0 complex. The V1 complex consists of three catalytic AB heterodimers that form a heterohexamer, three peripheral stalks each consisting of EG heterodimers, one central rotor including subunits D and F, and the regulatory subunits C and H. The proton translocation complex V0 consists of the proton transport subunit a, a ring of proteolipid subunits c9c'', rotary subunit d, subunits e and f, and the accessory subunits vah-19/Ac45 and vah-20/PRR.

The protein resides in the membrane. Functionally, proton-conducting pore forming subunit of the V0 complex of vacuolar(H+)-ATPase (V-ATPase), a multisubunit enzyme composed of a peripheral complex (V1) that hydrolyzes ATP and a membrane integral complex (V0) that translocates protons. V-ATPase is responsible for acidifying and maintaining the pH of intracellular compartments and in some cell types, is targeted to the plasma membrane, where it is responsible for acidifying the extracellular environment. Involved in necrotic cell death. Required along with other vacuolar ATPase components for the removal of protein aggregates which form in immature oocytes in the distal gonad. This removal occurs as the oocytes mature and move to the proximal gonad, is triggered by the introduction of sperm through mating and occurs before fertilization. The introduction of sperm triggers V-ATPase accumulation in proximal oocytes and induces lysosomal acidification which leads to engulfing of protein aggregates by lysosomes and subsequent clearance of the aggregates. Lysosomal acidification also leads to changes in mitochondrial morphology and function. Mitochondria in distal immature oocytes are fragmented, produce high levels of reactive oxygen species (ROS) and have high membrane potential, indicative of metabolic inactivity. In contrast, mitochondria in proximal mature oocytes are tubular with lower ROS levels and membrane potential, indicative of an active metabolic state required for aggregate mobilization before clearance. The chain is V-type proton ATPase 16 kDa proteolipid subunit c 2 from Caenorhabditis briggsae.